Consider the following 264-residue polypeptide: Ribosomal protein L11 methyltransferase (264 aa).

Residues Thr-116, Gly-137, Asp-159, and Asn-200 each coordinate S-adenosyl-L-methionine.

It belongs to the methyltransferase superfamily. PrmA family.

The protein localises to the cytoplasm. It catalyses the reaction L-lysyl-[protein] + 3 S-adenosyl-L-methionine = N(6),N(6),N(6)-trimethyl-L-lysyl-[protein] + 3 S-adenosyl-L-homocysteine + 3 H(+). Methylates ribosomal protein L11. The polypeptide is Ribosomal protein L11 methyltransferase (Thermotoga neapolitana).